Consider the following 194-residue polypeptide: dITP/XTP pyrophosphatase (194 aa).

Substrate is bound at residue 9 to 14; the sequence is THNPGK. Residues D40 and D69 each contribute to the Mg(2+) site. The Proton acceptor role is filled by D69. Residues S70, 152–155, K175, and 180–181 contribute to the substrate site; these read FGYD and HR.

The protein belongs to the HAM1 NTPase family. As to quaternary structure, homodimer. The cofactor is Mg(2+).

It carries out the reaction XTP + H2O = XMP + diphosphate + H(+). The enzyme catalyses dITP + H2O = dIMP + diphosphate + H(+). It catalyses the reaction ITP + H2O = IMP + diphosphate + H(+). In terms of biological role, pyrophosphatase that catalyzes the hydrolysis of nucleoside triphosphates to their monophosphate derivatives, with a high preference for the non-canonical purine nucleotides XTP (xanthosine triphosphate), dITP (deoxyinosine triphosphate) and ITP. Seems to function as a house-cleaning enzyme that removes non-canonical purine nucleotides from the nucleotide pool, thus preventing their incorporation into DNA/RNA and avoiding chromosomal lesions. In Caulobacter vibrioides (strain ATCC 19089 / CIP 103742 / CB 15) (Caulobacter crescentus), this protein is dITP/XTP pyrophosphatase.